The primary structure comprises 159 residues: SsrA-binding protein (159 aa).

Positions 138–159 (KRDTLKDKDWQRQKERMMKHSV) are disordered.

It belongs to the SmpB family.

The protein localises to the cytoplasm. Functionally, required for rescue of stalled ribosomes mediated by trans-translation. Binds to transfer-messenger RNA (tmRNA), required for stable association of tmRNA with ribosomes. tmRNA and SmpB together mimic tRNA shape, replacing the anticodon stem-loop with SmpB. tmRNA is encoded by the ssrA gene; the 2 termini fold to resemble tRNA(Ala) and it encodes a 'tag peptide', a short internal open reading frame. During trans-translation Ala-aminoacylated tmRNA acts like a tRNA, entering the A-site of stalled ribosomes, displacing the stalled mRNA. The ribosome then switches to translate the ORF on the tmRNA; the nascent peptide is terminated with the 'tag peptide' encoded by the tmRNA and targeted for degradation. The ribosome is freed to recommence translation, which seems to be the essential function of trans-translation. In Alteromonas mediterranea (strain DSM 17117 / CIP 110805 / LMG 28347 / Deep ecotype), this protein is SsrA-binding protein.